A 521-amino-acid polypeptide reads, in one-letter code: Cytochrome P450 1A1 (521 aa).

F229 is a substrate binding site. Residue C463 coordinates heme.

It belongs to the cytochrome P450 family. Heme serves as cofactor.

It is found in the endoplasmic reticulum membrane. The protein localises to the microsome membrane. It catalyses the reaction an organic molecule + reduced [NADPH--hemoprotein reductase] + O2 = an alcohol + oxidized [NADPH--hemoprotein reductase] + H2O + H(+). Its function is as follows. Cytochromes P450 are a group of heme-thiolate monooxygenases. They oxidize a variety of structurally unrelated compounds, including steroids, fatty acids, and xenobiotics. The sequence is that of Cytochrome P450 1A1 (cyp1a1) from Platichthys flesus (European flounder).